The primary structure comprises 386 residues: S-adenosylmethionine synthase (386 aa).

His16 is a binding site for ATP. Asp18 serves as a coordination point for Mg(2+). Glu44 provides a ligand contact to K(+). L-methionine contacts are provided by Glu57 and Gln100. The flexible loop stretch occupies residues 100–110; the sequence is QSPDINQGVDR. ATP is bound by residues 164–166, 230–231, Asp239, 245–246, Ala262, and Lys266; these read DGK, KF, and RK. Position 239 (Asp239) interacts with L-methionine. Position 270 (Lys270) interacts with L-methionine.

This sequence belongs to the AdoMet synthase family. In terms of assembly, homotetramer; dimer of dimers. Requires Mg(2+) as cofactor. It depends on K(+) as a cofactor.

It localises to the cytoplasm. The enzyme catalyses L-methionine + ATP + H2O = S-adenosyl-L-methionine + phosphate + diphosphate. The protein operates within amino-acid biosynthesis; S-adenosyl-L-methionine biosynthesis; S-adenosyl-L-methionine from L-methionine: step 1/1. Its function is as follows. Catalyzes the formation of S-adenosylmethionine (AdoMet) from methionine and ATP. The overall synthetic reaction is composed of two sequential steps, AdoMet formation and the subsequent tripolyphosphate hydrolysis which occurs prior to release of AdoMet from the enzyme. In Wolinella succinogenes (strain ATCC 29543 / DSM 1740 / CCUG 13145 / JCM 31913 / LMG 7466 / NCTC 11488 / FDC 602W) (Vibrio succinogenes), this protein is S-adenosylmethionine synthase.